A 110-amino-acid chain; its full sequence is UPF0235 protein Mpop_2087 (110 aa).

The protein belongs to the UPF0235 family.

This Methylorubrum populi (strain ATCC BAA-705 / NCIMB 13946 / BJ001) (Methylobacterium populi) protein is UPF0235 protein Mpop_2087.